A 1220-amino-acid chain; its full sequence is DNA-directed RNA polymerase subunit beta (1220 aa).

The protein belongs to the RNA polymerase beta chain family. In terms of assembly, the RNAP catalytic core consists of 2 alpha, 1 beta, 1 beta' and 1 omega subunit. When a sigma factor is associated with the core the holoenzyme is formed, which can initiate transcription.

It catalyses the reaction RNA(n) + a ribonucleoside 5'-triphosphate = RNA(n+1) + diphosphate. In terms of biological role, DNA-dependent RNA polymerase catalyzes the transcription of DNA into RNA using the four ribonucleoside triphosphates as substrates. The chain is DNA-directed RNA polymerase subunit beta from Mesomycoplasma hyopneumoniae (strain 7448) (Mycoplasma hyopneumoniae).